A 212-amino-acid polypeptide reads, in one-letter code: Outer-membrane lipoprotein carrier protein (212 aa).

An N-terminal signal peptide occupies residues 1 to 25; that stretch reads MRKRILVSACAALAVFAAHMPTALA.

Belongs to the LolA family. In terms of assembly, monomer.

The protein localises to the periplasm. Its function is as follows. Participates in the translocation of lipoproteins from the inner membrane to the outer membrane. Only forms a complex with a lipoprotein if the residue after the N-terminal Cys is not an aspartate (The Asp acts as a targeting signal to indicate that the lipoprotein should stay in the inner membrane). The sequence is that of Outer-membrane lipoprotein carrier protein from Cupriavidus pinatubonensis (strain JMP 134 / LMG 1197) (Cupriavidus necator (strain JMP 134)).